The sequence spans 622 residues: 1-deoxy-D-xylulose-5-phosphate synthase (622 aa).

Thiamine diphosphate is bound by residues His-80 and 121–123 (GHS). A Mg(2+)-binding site is contributed by Asp-152. Residues 153–154 (GA), Asn-181, Tyr-288, and Glu-370 each bind thiamine diphosphate. Position 181 (Asn-181) interacts with Mg(2+).

Belongs to the transketolase family. DXPS subfamily. As to quaternary structure, homodimer. Mg(2+) is required as a cofactor. Thiamine diphosphate serves as cofactor.

It carries out the reaction D-glyceraldehyde 3-phosphate + pyruvate + H(+) = 1-deoxy-D-xylulose 5-phosphate + CO2. Its pathway is metabolic intermediate biosynthesis; 1-deoxy-D-xylulose 5-phosphate biosynthesis; 1-deoxy-D-xylulose 5-phosphate from D-glyceraldehyde 3-phosphate and pyruvate: step 1/1. Its function is as follows. Catalyzes the acyloin condensation reaction between C atoms 2 and 3 of pyruvate and glyceraldehyde 3-phosphate to yield 1-deoxy-D-xylulose-5-phosphate (DXP). The protein is 1-deoxy-D-xylulose-5-phosphate synthase of Shewanella loihica (strain ATCC BAA-1088 / PV-4).